The sequence spans 144 residues: DNA-directed RNA polymerases II and V subunit 6B (144 aa).

Residues 1 to 32 show a composition bias toward acidic residues; sequence MADDDYNEVDDLGYEDEPAEPEIEEGVEEDAD. A disordered region spans residues 1–62; it reads MADDDYNEVD…EPVQRPRKTS (62 aa). A compositionally biased stretch (basic and acidic residues) spans 46-56; it reads TEDKVETEPVQ.

This sequence belongs to the archaeal Rpo6/eukaryotic RPB6 RNA polymerase subunit family. In terms of assembly, component of the RNA polymerase II and V complexes.

It is found in the nucleus. Its function is as follows. DNA-dependent RNA polymerase catalyzes the transcription of DNA into RNA using the four ribonucleoside triphosphates as substrates. Component of RNA polymerase II which synthesizes mRNA precursors and many functional non-coding RNAs. Pol II is the central component of the basal RNA polymerase II transcription machinery. It is composed of mobile elements that move relative to each other. Component of RNA polymerase V which mediates RNA-directed DNA methylation-dependent (RdDM) transcriptional gene silencing (TGS) of endogenous repeated sequences, including transposable elements. The chain is DNA-directed RNA polymerases II and V subunit 6B (NRPB6B) from Arabidopsis thaliana (Mouse-ear cress).